Here is a 372-residue protein sequence, read N- to C-terminus: NAD(P)H-quinone oxidoreductase subunit 1 (372 aa).

A run of 9 helical transmembrane segments spans residues 27 to 47 (AIWMPLPMILMLIGATVGVLV), 65 to 85 (PEYIGPLGLLAPVADGLKLVF), 97 to 117 (WLFTLGPILVVLPVFLSYLIV), 128 to 148 (VGTGIFLWIALSSIQPIGLLM), 166 to 186 (AAQSISYEIPLALSVLAIVMM), 204 to 224 (ILGWNIWRQPLGFMIFWIAAL), 266 to 286 (ILSALLVAVLYLGGWDFPIPI), 308 to 328 (ALGITMTLVKAYFLVFIAILL), and 347 to 367 (FLLPVGLVNLLLTAALKLAFP).

It belongs to the complex I subunit 1 family. In terms of assembly, NDH-1 is composed of at least 11 different subunits.

The protein localises to the cellular thylakoid membrane. It catalyses the reaction a plastoquinone + NADH + (n+1) H(+)(in) = a plastoquinol + NAD(+) + n H(+)(out). It carries out the reaction a plastoquinone + NADPH + (n+1) H(+)(in) = a plastoquinol + NADP(+) + n H(+)(out). Functionally, NDH-1 shuttles electrons from an unknown electron donor, via FMN and iron-sulfur (Fe-S) centers, to quinones in the respiratory and/or the photosynthetic chain. The immediate electron acceptor for the enzyme in this species is believed to be plastoquinone. Couples the redox reaction to proton translocation, and thus conserves the redox energy in a proton gradient. The protein is NAD(P)H-quinone oxidoreductase subunit 1 of Nostoc sp. (strain PCC 7120 / SAG 25.82 / UTEX 2576).